Reading from the N-terminus, the 49-residue chain is Large ribosomal subunit protein bL33 (49 aa).

Belongs to the bacterial ribosomal protein bL33 family.

The protein is Large ribosomal subunit protein bL33 of Clostridium botulinum (strain ATCC 19397 / Type A).